A 622-amino-acid polypeptide reads, in one-letter code: Probable ATP-dependent RNA helicase DDX41 (622 aa).

Residues 1 to 15 (MEESEPERKRARTDE) are compositionally biased toward basic and acidic residues. Disordered stretches follow at residues 1–39 (MEES…YVPL) and 52–84 (QRRR…PQSN). Serine 4 is modified (phosphoserine). An N6-acetyllysine modification is found at lysine 9. Lysine 9 participates in a covalent cross-link: Glycyl lysine isopeptide (Lys-Gly) (interchain with G-Cter in ubiquitin). A phosphoserine mark is found at serine 21 and serine 23. The residue at position 33 (tyrosine 33) is a Phosphotyrosine. A Glycyl lysine isopeptide (Lys-Gly) (interchain with G-Cter in ubiquitin) cross-link involves residue lysine 115. Residues 181–209 (KSFKEMKFPAAILRGLKKKGIHHPTPIQI) carry the Q motif motif. The Helicase ATP-binding domain maps to 212–396 (IPTILSGRDM…KSALVKPVTI (185 aa)). An ATP-binding site is contributed by 225–232 (AFTGSGKT). The DEAD box signature appears at 344–347 (DEAD). The Helicase C-terminal domain maps to 407–567 (DVIQEVEYVK…KVPPVLQVLH (161 aa)). Tyrosine 414 bears the Phosphotyrosine; by BTK mark. Residues lysine 416 and lysine 442 each participate in a glycyl lysine isopeptide (Lys-Gly) (interchain with G-Cter in SUMO2) cross-link. A CCHC-type zinc finger spans residues 580–597 (RGCAFCGGLGHRITDCPK).

Belongs to the DEAD box helicase family. DDX41 subfamily. As to quaternary structure, identified in the spliceosome C complex. Interacts with ERCC6. Interacts with FAM50A. Interacts with STING1. Interacts with CGAS. Interacts with several spliceosomes components such as PRP19 or CDC5L. Post-translationally, acetylation at Lys-9 regulates the nuclear/cytoplasmic localization. Phosphorylated by BTK; phosphorylation induces binding to dsDNA and STING1. In terms of processing, 'Lys-48'-linked ubiquitinated and degraded by TRIM21 leading to negative regulation of the innate immune response to intracellular dsDNA.

The protein localises to the nucleus. It localises to the cytoplasm. It catalyses the reaction ATP + H2O = ADP + phosphate + H(+). Multifunctional protein that participates in many aspects of cellular RNA metabolism. Plays pivotal roles in innate immune sensing and hematopoietic homeostasis. Recognizes foreign or self-nucleic acids generated during microbial infection, thereby initiating anti-pathogen responses. Mechanistically, phosphorylation by BTK allows binding to dsDNA leading to interaction with STING1. Modulates the homeostasis of dsDNA through its ATP-dependent DNA-unwinding activity and ATP-independent strand-annealing activity. In turn, induces STING1-mediated type I interferon and cytokine responses to DNA and DNA viruses. Selectively modulates the transcription of certain immunity-associated genes by regulating their alternative splicing. Binds to RNA (R)-loops, structures consisting of DNA/RNA hybrids and a displaced strand of DNA that occur during transcription, and prevents their accumulation, thereby maintaining genome stability. Also participates in pre-mRNA splicing, translational regulation and snoRNA processing, which is essential for ribosome biogenesis. The chain is Probable ATP-dependent RNA helicase DDX41 (DDX41) from Homo sapiens (Human).